The chain runs to 446 residues: Phosphoglucosamine mutase (446 aa).

The Phosphoserine intermediate role is filled by serine 88. Mg(2+) contacts are provided by serine 88, aspartate 231, aspartate 233, and aspartate 235. Serine 88 bears the Phosphoserine mark.

It belongs to the phosphohexose mutase family. It depends on Mg(2+) as a cofactor. In terms of processing, activated by phosphorylation.

The catalysed reaction is alpha-D-glucosamine 1-phosphate = D-glucosamine 6-phosphate. In terms of biological role, catalyzes the conversion of glucosamine-6-phosphate to glucosamine-1-phosphate. The chain is Phosphoglucosamine mutase from Methanococcus vannielii (strain ATCC 35089 / DSM 1224 / JCM 13029 / OCM 148 / SB).